The sequence spans 132 residues: Tumor suppressor ARF (132 aa).

The tract at residues methionine 1–proline 64 is interaction with CDK5RAP3 and MDM2. Residues glycine 56 to glycine 132 are disordered. Residues arginine 71–glycine 83 show a composition bias toward low complexity. A compositionally biased stretch (basic residues) spans alanine 84–arginine 99. The span at glycine 103–alanine 117 shows a compositional bias: gly residues.

Does not interact with cyclins, CDK1, CDK2, CDK4, CDK5 or CDK6. Binds to BCL6, E2F1, HUWE1, MDM2, MYC, NPM1/B23, TOP1/TOPOI and UBE2I/UBC9. Interacts with TBRG1 and COMMD1. Interacts with CDKN2AIP and E4F1. Interacts with CDK5RAP3 and MDM2; form a ternary complex involved in regulation of p53/TP53. Interacts with NOP53; the interaction is direct and promotes ARF nucleoplasmic relocalization and ubiquitin-mediated proteasomal degradation. Interacts with TTF1 (via the N-terminal region (NRD) and a C-terminal region); the interaction is direct and inhibits the nucleolar localization of TTF1. In terms of assembly, interacts with C1QBP. Post-translationally, ubiquitinated in normal cells by TRIP12 via the ubiquitin fusion degradation (UFD) pathway, a process that mediates ubiquitination at the N-terminus, regardless of the absence of lysine residues. Ubiquitination leads to its proteasomal degradation. In cancer cells, however, TRIP12 is located in a different cell compartment, preventing ubiquitination and degradation.

Its subcellular location is the nucleus. The protein resides in the nucleolus. The protein localises to the nucleoplasm. It is found in the mitochondrion. Its function is as follows. Capable of inducing cell cycle arrest in G1 and G2 phases. Acts as a tumor suppressor. Binds to MDM2 and blocks its nucleocytoplasmic shuttling by sequestering it in the nucleolus. This inhibits the oncogenic action of MDM2 by blocking MDM2-induced degradation of p53 and enhancing p53-dependent transactivation and apoptosis. Also induces G2 arrest and apoptosis in a p53-independent manner by preventing the activation of cyclin B1/CDC2 complexes. Binds to BCL6 and down-regulates BCL6-induced transcriptional repression. Binds to E2F1 and MYC and blocks their transcriptional activator activity but has no effect on MYC transcriptional repression. Binds to TOP1/TOPOI and stimulates its activity. This complex binds to rRNA gene promoters and may play a role in rRNA transcription and/or maturation. Interacts with NPM1/B23 and promotes its polyubiquitination and degradation, thus inhibiting rRNA processing. Plays a role in inhibiting ribosome biogenesis, perhaps by binding to the nucleolar localization sequence of transcription termination factor TTF1, and thereby preventing nucleolar localization of TTF1. Interacts with COMMD1 and promotes its 'Lys63'-linked polyubiquitination. Interacts with UBE2I/UBC9 and enhances sumoylation of a number of its binding partners including MDM2 and E2F1. Binds to HUWE1 and represses its ubiquitin ligase activity. May play a role in controlling cell proliferation and apoptosis during mammary gland development. In terms of biological role, may be involved in regulation of autophagy and caspase-independent cell death; the short-lived mitochondrial isoform is stabilized by C1QBP. This is Tumor suppressor ARF from Homo sapiens (Human).